Reading from the N-terminus, the 413-residue chain is Oxidoreductase vrtI (413 aa).

Residues 235–341 (DAESLTTLSM…RYSIAYFLRA (107 aa)) form the Fe2OG dioxygenase domain. 3 residues coordinate Fe cation: His262, Asp264, and His319. Position 332 (Arg332) interacts with 2-oxoglutarate.

The protein belongs to the iron/ascorbate-dependent oxidoreductase family.

It participates in secondary metabolite biosynthesis; terpenoid biosynthesis. In terms of biological role, oxidoreductase; part of the gene cluster that mediates the biosynthesis of viridicatumtoxin, a tetracycline-like fungal meroterpenoid with a unique, fused spirobicyclic ring system. The first step of the pathway is the production of the malonamoyl-CoA starter unit for the polyketide synthase vrtA. The aldolase vrtJ may be involved in the synthesis of the malonamate substrate for malonamoyl-CoA synthetase vrtB. The polyketide synthase vrtA then may utilize the malonamoyl-CoA starter unit, followed by sequential condensation of eight malonyl-CoA units to form the polyketide backbone. The cyclization of the last ring could be mediated by the lactamase-like protein vrtG. The proposed post-PKS tailoring steps are a hydroxylation at C5 catalyzed the cytochrome P450 monooxygenase vrtE, a hydroxylation at C12a catalyzed by VrtH and/or VrtI, and an O-methylation by the O-methyltransferase vrtF. VrtC is then proposed to catalyze the transfer of a geranyl group synthesized by vrtD to the aromatic C ring of the tetracyclic polyketide intermediate of viridicatumtoxin to yield previridicatumtoxin. Finally, the cytochrome P450 monooxygenase vrtK catalyzes the spirocyclization of the geranyl moiety of previridicatumtoxin to afford viridicatumtoxin. The polypeptide is Oxidoreductase vrtI (Penicillium aethiopicum).